The following is a 353-amino-acid chain: Heat-inducible transcription repressor HrcA (353 aa).

Belongs to the HrcA family.

Its function is as follows. Negative regulator of class I heat shock genes (grpE-dnaK-dnaJ and groELS operons). Prevents heat-shock induction of these operons. In Anaeromyxobacter dehalogenans (strain 2CP-1 / ATCC BAA-258), this protein is Heat-inducible transcription repressor HrcA.